The chain runs to 559 residues: Glucose-6-phosphate isomerase 2 (559 aa).

Glu367 functions as the Proton donor in the catalytic mechanism. Catalysis depends on residues His398 and Lys522.

This sequence belongs to the GPI family.

Its subcellular location is the cytoplasm. It carries out the reaction alpha-D-glucose 6-phosphate = beta-D-fructose 6-phosphate. It functions in the pathway carbohydrate biosynthesis; gluconeogenesis. Its pathway is carbohydrate degradation; glycolysis; D-glyceraldehyde 3-phosphate and glycerone phosphate from D-glucose: step 2/4. Catalyzes the reversible isomerization of glucose-6-phosphate to fructose-6-phosphate. The chain is Glucose-6-phosphate isomerase 2 from Chromohalobacter salexigens (strain ATCC BAA-138 / DSM 3043 / CIP 106854 / NCIMB 13768 / 1H11).